A 197-amino-acid polypeptide reads, in one-letter code: Dephospho-CoA kinase (197 aa).

One can recognise a DPCK domain in the interval 3 to 197 (VLGLTGSIGL…IDELRGQRGS (195 aa)). 11–16 (GLGKST) serves as a coordination point for ATP.

The protein belongs to the CoaE family.

Its subcellular location is the cytoplasm. It carries out the reaction 3'-dephospho-CoA + ATP = ADP + CoA + H(+). It participates in cofactor biosynthesis; coenzyme A biosynthesis; CoA from (R)-pantothenate: step 5/5. Functionally, catalyzes the phosphorylation of the 3'-hydroxyl group of dephosphocoenzyme A to form coenzyme A. This Mesorhizobium japonicum (strain LMG 29417 / CECT 9101 / MAFF 303099) (Mesorhizobium loti (strain MAFF 303099)) protein is Dephospho-CoA kinase.